Here is a 559-residue protein sequence, read N- to C-terminus: Branched-chain-amino-acid aminotransferase-like protein 2 (559 aa).

The protein belongs to the class-IV pyridoxal-phosphate-dependent aminotransferase family.

This is Branched-chain-amino-acid aminotransferase-like protein 2 from Arabidopsis thaliana (Mouse-ear cress).